Consider the following 273-residue polypeptide: Putative expansin-B2 (273 aa).

Residues 1-29 (MTILVVDRYYMLMNLLFALTCLLLNLTHC) form the signal peptide. Asparagine 36 carries an N-linked (GlcNAc...) asparagine glycan. The Expansin-like EG45 domain maps to 65–173 (GGACGYGNAV…KKVECNYIGK (109 aa)). Intrachain disulfides connect cysteine 68–cysteine 97, cysteine 100–cysteine 168, and cysteine 105–cysteine 111. In terms of domain architecture, Expansin-like CBD spans 186–269 (NSFAVLVAYV…NWQPGAIYKS (84 aa)).

The protein belongs to the expansin family. Expansin B subfamily.

The protein localises to the secreted. It localises to the cell wall. Its subcellular location is the membrane. May cause loosening and extension of plant cell walls by disrupting non-covalent bonding between cellulose microfibrils and matrix glucans. No enzymatic activity has been found. The protein is Putative expansin-B2 (EXPB2) of Arabidopsis thaliana (Mouse-ear cress).